The following is a 300-amino-acid chain: Polyamine aminopropyltransferase (300 aa).

The region spanning 4 to 237 (WHWHIEWQTP…GLWGFVYASD (234 aa)) is the PABS domain. Residue Gln-33 coordinates S-methyl-5'-thioadenosine. Residues His-64 and Glu-88 each contribute to the spermidine site. S-methyl-5'-thioadenosine is bound by residues Asp-108 and 140–141 (DG). Asp-158 serves as the catalytic Proton acceptor. Pro-167 is an S-methyl-5'-thioadenosine binding site.

Belongs to the spermidine/spermine synthase family. As to quaternary structure, homodimer or homotetramer.

The protein localises to the cytoplasm. The catalysed reaction is S-adenosyl 3-(methylsulfanyl)propylamine + putrescine = S-methyl-5'-thioadenosine + spermidine + H(+). Its pathway is amine and polyamine biosynthesis; spermidine biosynthesis; spermidine from putrescine: step 1/1. Catalyzes the irreversible transfer of a propylamine group from the amino donor S-adenosylmethioninamine (decarboxy-AdoMet) to putrescine (1,4-diaminobutane) to yield spermidine. In Sulfurisphaera tokodaii (strain DSM 16993 / JCM 10545 / NBRC 100140 / 7) (Sulfolobus tokodaii), this protein is Polyamine aminopropyltransferase.